Reading from the N-terminus, the 132-residue chain is Small ribosomal subunit protein uS8 (132 aa).

This sequence belongs to the universal ribosomal protein uS8 family. In terms of assembly, part of the 30S ribosomal subunit. Contacts proteins S5 and S12.

One of the primary rRNA binding proteins, it binds directly to 16S rRNA central domain where it helps coordinate assembly of the platform of the 30S subunit. This chain is Small ribosomal subunit protein uS8, found in Geobacillus thermodenitrificans (strain NG80-2).